Here is a 174-residue protein sequence, read N- to C-terminus: Ribosome maturation factor RimM (174 aa).

Residues 98–171 (EDEFYFHEII…KIKIHVMEGL (74 aa)) enclose the PRC barrel domain.

This sequence belongs to the RimM family. Binds ribosomal protein uS19.

It is found in the cytoplasm. In terms of biological role, an accessory protein needed during the final step in the assembly of 30S ribosomal subunit, possibly for assembly of the head region. Essential for efficient processing of 16S rRNA. May be needed both before and after RbfA during the maturation of 16S rRNA. It has affinity for free ribosomal 30S subunits but not for 70S ribosomes. This chain is Ribosome maturation factor RimM, found in Bacillus velezensis (strain DSM 23117 / BGSC 10A6 / LMG 26770 / FZB42) (Bacillus amyloliquefaciens subsp. plantarum).